Reading from the N-terminus, the 106-residue chain is Iron-sulfur cluster assembly protein CyaY (106 aa).

The protein belongs to the frataxin family.

Involved in iron-sulfur (Fe-S) cluster assembly. May act as a regulator of Fe-S biogenesis. This Salmonella agona (strain SL483) protein is Iron-sulfur cluster assembly protein CyaY.